A 640-amino-acid polypeptide reads, in one-letter code: Chaperone protein DnaK (640 aa).

The residue at position 199 (T199) is a Phosphothreonine; by autocatalysis. The segment covering 606 to 621 (QQAAGAGAQQADGTGK) has biased composition (low complexity). The tract at residues 606 to 640 (QQAAGAGAQQADGTGKAADDGVVDAEFEEVKEDNK) is disordered. Residues 626-640 (GVVDAEFEEVKEDNK) show a composition bias toward acidic residues.

It belongs to the heat shock protein 70 family.

In terms of biological role, acts as a chaperone. The protein is Chaperone protein DnaK of Cellvibrio japonicus (strain Ueda107) (Pseudomonas fluorescens subsp. cellulosa).